The following is a 351-amino-acid chain: Geranylgeranyl pyrophosphate synthase (351 aa).

Isopentenyl diphosphate-binding residues include lysine 55, arginine 58, and glutamine 93. Mg(2+)-binding residues include aspartate 100 and aspartate 104. Arginine 109 serves as a coordination point for dimethylallyl diphosphate. Residue arginine 110 coordinates isopentenyl diphosphate. Dimethylallyl diphosphate is bound by residues lysine 196, threonine 197, glutamine 236, lysine 253, and lysine 262.

Belongs to the FPP/GGPP synthase family. In terms of assembly, interacts with fps1. Requires Mg(2+) as cofactor.

The protein resides in the cytoplasm. It is found in the nucleus. The catalysed reaction is isopentenyl diphosphate + dimethylallyl diphosphate = (2E)-geranyl diphosphate + diphosphate. It carries out the reaction isopentenyl diphosphate + (2E)-geranyl diphosphate = (2E,6E)-farnesyl diphosphate + diphosphate. The enzyme catalyses isopentenyl diphosphate + (2E,6E)-farnesyl diphosphate = (2E,6E,10E)-geranylgeranyl diphosphate + diphosphate. Its pathway is isoprenoid biosynthesis; farnesyl diphosphate biosynthesis; farnesyl diphosphate from geranyl diphosphate and isopentenyl diphosphate: step 1/1. It participates in isoprenoid biosynthesis; geranyl diphosphate biosynthesis; geranyl diphosphate from dimethylallyl diphosphate and isopentenyl diphosphate: step 1/1. The protein operates within isoprenoid biosynthesis; geranylgeranyl diphosphate biosynthesis; geranylgeranyl diphosphate from farnesyl diphosphate and isopentenyl diphosphate: step 1/1. Functionally, catalyzes the trans-addition of the 3 molecules of IPP onto DMAPP to form geranylgeranyl pyrophosphate. Required for the membrane attachment of ypt7 and rhb1. May be involved in vesicle trafficking and protein sorting. Required for forespore membrane formation. This chain is Geranylgeranyl pyrophosphate synthase (spo9), found in Schizosaccharomyces pombe (strain 972 / ATCC 24843) (Fission yeast).